We begin with the raw amino-acid sequence, 270 residues long: Aliphatic sulfonates import ATP-binding protein SsuB 2 (270 aa).

In terms of domain architecture, ABC transporter spans 17-241 (LLDLRIARKL…PRDRRDPSLA (225 aa)). 50–57 (GPSGCGKS) is an ATP binding site.

The protein belongs to the ABC transporter superfamily. Aliphatic sulfonates importer (TC 3.A.1.17.2) family. The complex is composed of two ATP-binding proteins (SsuB), two transmembrane proteins (SsuC) and a solute-binding protein (SsuA).

It localises to the cell inner membrane. The enzyme catalyses ATP + H2O + aliphatic sulfonate-[sulfonate-binding protein]Side 1 = ADP + phosphate + aliphatic sulfonateSide 2 + [sulfonate-binding protein]Side 1.. Part of the ABC transporter complex SsuABC involved in aliphatic sulfonates import. Responsible for energy coupling to the transport system. The sequence is that of Aliphatic sulfonates import ATP-binding protein SsuB 2 from Burkholderia cenocepacia (strain HI2424).